We begin with the raw amino-acid sequence, 210 residues long: Glutathione S-transferase P (210 aa).

One can recognise a GST N-terminal domain in the interval 2–81 (PPYTVVYFPV…HLGRTLGLYG (80 aa)). Phosphotyrosine; by EGFR is present on tyrosine 4. Glutathione is bound by residues tyrosine 8, arginine 14, tryptophan 39, lysine 45, and 52-53 (QL). Phosphothreonine is present on threonine 62. 65–66 (QS) contributes to the glutathione binding site. The GST C-terminal domain occupies 83–204 (DQREAALVDM…ASPEHVNLPI (122 aa)). N6-succinyllysine is present on residues lysine 103 and lysine 116. Lysine 128 carries the post-translational modification N6-acetyllysine.

This sequence belongs to the GST superfamily. Pi family. As to quaternary structure, homodimer. Interacts with CDK5.

It localises to the cytoplasm. Its subcellular location is the mitochondrion. The protein resides in the nucleus. It carries out the reaction RX + glutathione = an S-substituted glutathione + a halide anion + H(+). It catalyses the reaction prostaglandin J2 + glutathione = prostaglandin J2-S-(R)-glutathione. The catalysed reaction is prostaglandin J2 + glutathione = prostaglandin J2-S-(S)-glutathione. The enzyme catalyses prostaglandin A2 + glutathione = prostaglandin A2-S-(S)-glutathione. It carries out the reaction 11(S)-hydroxy-14(S),15(S)-epoxy-(5Z,8Z,12E)-eicosatrienoate + glutathione = (11S,15S)-dihydroxy-14(R)-S-glutathionyl-(5Z,8Z,12E)-eicosatrienoate. Its function is as follows. Conjugation of reduced glutathione to a wide number of exogenous and endogenous hydrophobic electrophiles. Involved in the formation of glutathione conjugates of both prostaglandin A2 (PGA2) and prostaglandin J2 (PGJ2). Participates in the formation of novel hepoxilin regioisomers. Negatively regulates CDK5 activity via p25/p35 translocation to prevent neurodegeneration. The polypeptide is Glutathione S-transferase P (GSTP1) (Macaca mulatta (Rhesus macaque)).